Reading from the N-terminus, the 261-residue chain is Glucose 1-dehydrogenase 4 (261 aa).

11 to 35 (VITGGSTGLGRAMAVRFGQEEAKVV) contacts NAD(+). Ser145 serves as a coordination point for substrate. Catalysis depends on Tyr158, which acts as the Proton acceptor.

Belongs to the short-chain dehydrogenases/reductases (SDR) family. As to quaternary structure, homotetramer.

The enzyme catalyses D-glucose + NAD(+) = D-glucono-1,5-lactone + NADH + H(+). The catalysed reaction is D-glucose + NADP(+) = D-glucono-1,5-lactone + NADPH + H(+). The chain is Glucose 1-dehydrogenase 4 (gdhIV) from Priestia megaterium (Bacillus megaterium).